The primary structure comprises 259 residues: Phosphatidylglycerol--prolipoprotein diacylglyceryl transferase (259 aa).

Helical transmembrane passes span 16 to 36 (LAIS…WFYA), 55 to 75 (FITY…VLLY), 92 to 112 (EGGM…YLFC), and 117 to 137 (INFL…LFLG). Arg-138 serves as a coordination point for a 1,2-diacyl-sn-glycero-3-phospho-(1'-sn-glycerol). 3 helical membrane passes run 172-192 (QLYE…YATF), 201-221 (GLNS…IEIF), and 228-248 (IGFI…MLLL).

It belongs to the Lgt family.

The protein localises to the cell inner membrane. It carries out the reaction L-cysteinyl-[prolipoprotein] + a 1,2-diacyl-sn-glycero-3-phospho-(1'-sn-glycerol) = an S-1,2-diacyl-sn-glyceryl-L-cysteinyl-[prolipoprotein] + sn-glycerol 1-phosphate + H(+). The protein operates within protein modification; lipoprotein biosynthesis (diacylglyceryl transfer). In terms of biological role, catalyzes the transfer of the diacylglyceryl group from phosphatidylglycerol to the sulfhydryl group of the N-terminal cysteine of a prolipoprotein, the first step in the formation of mature lipoproteins. This chain is Phosphatidylglycerol--prolipoprotein diacylglyceryl transferase, found in Rickettsia rickettsii (strain Iowa).